The chain runs to 139 residues: Chemical-damaging agent resistance protein B (139 aa).

It belongs to the CAPAB/TerDEXZ family.

Its function is as follows. Not known; could confer methyl methane sulfonate (MMS), mitomycin C (MC), and UV resistance. This is Chemical-damaging agent resistance protein B from Clostridium acetobutylicum.